The chain runs to 293 residues: Ethanolamine ammonia-lyase small subunit (293 aa).

Adenosylcob(III)alamin is bound by residues valine 207 and glutamate 228.

The protein belongs to the EutC family. In terms of assembly, the basic unit is a heterodimer which dimerizes to form tetramers. The heterotetramers trimerize; 6 large subunits form a core ring with 6 small subunits projecting outwards. Adenosylcob(III)alamin is required as a cofactor.

It is found in the bacterial microcompartment. The catalysed reaction is ethanolamine = acetaldehyde + NH4(+). It participates in amine and polyamine degradation; ethanolamine degradation. Its function is as follows. Catalyzes the deamination of various vicinal amino-alcohols to oxo compounds. Allows this organism to utilize ethanolamine as the sole source of nitrogen and carbon in the presence of external vitamin B12. The chain is Ethanolamine ammonia-lyase small subunit from Listeria monocytogenes serotype 4b (strain CLIP80459).